Reading from the N-terminus, the 149-residue chain is Large ribosomal subunit protein uL24 (149 aa).

It belongs to the universal ribosomal protein uL24 family. As to quaternary structure, part of the 50S ribosomal subunit.

One of two assembly initiator proteins, it binds directly to the 5'-end of the 23S rRNA, where it nucleates assembly of the 50S subunit. Functionally, one of the proteins that surrounds the polypeptide exit tunnel on the outside of the subunit. In Nostoc sp. (strain PCC 7120 / SAG 25.82 / UTEX 2576), this protein is Large ribosomal subunit protein uL24.